A 318-amino-acid chain; its full sequence is N-succinylornithine carbamoyltransferase (318 aa).

Carbamoyl phosphate contacts are provided by residues 47–50, W75, and R110; that span reads SLRT. E142 is a binding site for N(2)-succinyl-L-ornithine. 147–150 is a binding site for carbamoyl phosphate; it reads HPLQ. N(2)-succinyl-L-ornithine-binding residues include H176 and K236. Residue 274 to 275 participates in carbamoyl phosphate binding; sequence CL. Residue R278 coordinates N(2)-succinyl-L-ornithine. R302 provides a ligand contact to carbamoyl phosphate.

It belongs to the aspartate/ornithine carbamoyltransferase superfamily. SOTCase family. In terms of assembly, homotrimer.

It carries out the reaction N(2)-succinyl-L-ornithine + carbamoyl phosphate = N(2)-succinyl-L-citrulline + phosphate + H(+). Its pathway is amino-acid biosynthesis; L-arginine biosynthesis. Its function is as follows. Catalyzes the transfer of the carbamoyl group from carbamoyl phosphate to the delta-amino group of N(2)-succinyl-L-ornithine to produce N(2)-succinyl-L-citrulline. Is essential for arginine biosynthesis. Has no activity with either L-ornithine or L-aspartate as substrate. Also has no detectable AOTCase activity, being unable to convert N(2)-acetyl-L-ornithine to N(2)-acetyl-L-citrulline. This Bacteroides fragilis (strain 638R) protein is N-succinylornithine carbamoyltransferase.